Here is an 80-residue protein sequence, read N- to C-terminus: Exodeoxyribonuclease 7 small subunit (80 aa).

This sequence belongs to the XseB family. In terms of assembly, heterooligomer composed of large and small subunits.

It is found in the cytoplasm. It carries out the reaction Exonucleolytic cleavage in either 5'- to 3'- or 3'- to 5'-direction to yield nucleoside 5'-phosphates.. Functionally, bidirectionally degrades single-stranded DNA into large acid-insoluble oligonucleotides, which are then degraded further into small acid-soluble oligonucleotides. This chain is Exodeoxyribonuclease 7 small subunit, found in Escherichia coli O139:H28 (strain E24377A / ETEC).